Reading from the N-terminus, the 491-residue chain is 1-aminocyclopropane-1-carboxylate synthase (491 aa).

Residue K278 is modified to N6-(pyridoxal phosphate)lysine.

Belongs to the class-I pyridoxal-phosphate-dependent aminotransferase family. Homodimer. Pyridoxal 5'-phosphate serves as cofactor.

It catalyses the reaction S-adenosyl-L-methionine = 1-aminocyclopropane-1-carboxylate + S-methyl-5'-thioadenosine + H(+). Its pathway is alkene biosynthesis; ethylene biosynthesis via S-adenosyl-L-methionine; ethylene from S-adenosyl-L-methionine: step 1/2. Functionally, catalyzes the formation of 1-aminocyclopropane-1-carboxylate, a direct precursor of ethylene in higher plants. The chain is 1-aminocyclopropane-1-carboxylate synthase (ACS1) from Nicotiana tabacum (Common tobacco).